Reading from the N-terminus, the 373-residue chain is MEFKLKHKDGMARVCEITTAHSTFLTPVFMPVGTVGAVKSLDANDMKNELDAKIILANTYHMYLRPTSKVVKDFGGLHGFTKFDRSFLTDSGGFQAFSLSKNSKHFNEGIEFKSHIDGSRHLFTPKSVLDTQYDFNSDIMMILDDLVALPATKERVKISVDRTILWAKEAITYHKNMQNKGIGIGQNIFGIIQGGTDYEERKRCALSLNEMPFDGLAIGGLSVGEENALMYETVQNLNPYLDENRPRYLMGVGTPEDLVENVERGVDMFDCVMPTRNARNGTFFTSFGKFNIKKAEFINDHEVIDSTCSCYTCRNFSRGYLNHLFKAKELTFFRLASLHNLHYYLELARKMREAILNNSFTQFKRNFYHLRGK.

Asp90 functions as the Proton acceptor in the catalytic mechanism. Substrate-binding positions include 90–94, Asp144, Gln193, and Gly220; that span reads DSGGF. Positions 251-257 are RNA binding; the sequence is GVGTPED. Asp270 acts as the Nucleophile in catalysis. Residues 275–279 are RNA binding; important for wobble base 34 recognition; sequence TRNAR. 4 residues coordinate Zn(2+): Cys308, Cys310, Cys313, and His339.

The protein belongs to the queuine tRNA-ribosyltransferase family. Homodimer. Within each dimer, one monomer is responsible for RNA recognition and catalysis, while the other monomer binds to the replacement base PreQ1. Zn(2+) is required as a cofactor.

The enzyme catalyses 7-aminomethyl-7-carbaguanine + guanosine(34) in tRNA = 7-aminomethyl-7-carbaguanosine(34) in tRNA + guanine. It participates in tRNA modification; tRNA-queuosine biosynthesis. Its function is as follows. Catalyzes the base-exchange of a guanine (G) residue with the queuine precursor 7-aminomethyl-7-deazaguanine (PreQ1) at position 34 (anticodon wobble position) in tRNAs with GU(N) anticodons (tRNA-Asp, -Asn, -His and -Tyr). Catalysis occurs through a double-displacement mechanism. The nucleophile active site attacks the C1' of nucleotide 34 to detach the guanine base from the RNA, forming a covalent enzyme-RNA intermediate. The proton acceptor active site deprotonates the incoming PreQ1, allowing a nucleophilic attack on the C1' of the ribose to form the product. After dissociation, two additional enzymatic reactions on the tRNA convert PreQ1 to queuine (Q), resulting in the hypermodified nucleoside queuosine (7-(((4,5-cis-dihydroxy-2-cyclopenten-1-yl)amino)methyl)-7-deazaguanosine). This Campylobacter jejuni subsp. jejuni serotype O:2 (strain ATCC 700819 / NCTC 11168) protein is Queuine tRNA-ribosyltransferase.